A 251-amino-acid chain; its full sequence is Pantothenate synthetase (251 aa).

28-35 provides a ligand contact to ATP; that stretch reads MGALHTGH. The Proton donor role is filled by H35. Q59 contributes to the (R)-pantoate binding site. A beta-alanine-binding site is contributed by Q59. ATP is bound at residue 145-148; sequence GEKD. Q151 is a (R)-pantoate binding site. Residues V174 and 182–185 contribute to the ATP site; that span reads KSSR.

Belongs to the pantothenate synthetase family. Homodimer.

It is found in the cytoplasm. It carries out the reaction (R)-pantoate + beta-alanine + ATP = (R)-pantothenate + AMP + diphosphate + H(+). It participates in cofactor biosynthesis; (R)-pantothenate biosynthesis; (R)-pantothenate from (R)-pantoate and beta-alanine: step 1/1. Its function is as follows. Catalyzes the condensation of pantoate with beta-alanine in an ATP-dependent reaction via a pantoyl-adenylate intermediate. The polypeptide is Pantothenate synthetase (Bdellovibrio bacteriovorus (strain ATCC 15356 / DSM 50701 / NCIMB 9529 / HD100)).